We begin with the raw amino-acid sequence, 77 residues long: Small ribosomal subunit protein bS20 (77 aa).

The protein belongs to the bacterial ribosomal protein bS20 family.

Binds directly to 16S ribosomal RNA. In Lactococcus lactis subsp. lactis (strain IL1403) (Streptococcus lactis), this protein is Small ribosomal subunit protein bS20.